Reading from the N-terminus, the 3305-residue chain is MGKPLSRPDCLRRNPTCLGKGEDEDGYIEDCYVPQRSIYDTMRINEQIDQGSKLNQTSKSTMEKMEGSTISSNGTLGASSNVFEARGPEGKKLDERIIFDALKLSSDVQKSAPVPPRRRPNAERKDNVNRRSWKSFMPPNFPEFAERMEASLSEVSEAGASNPSLQEKKESSSALTESSGHFDHREPQSESVTLEHMSKSVDIPEVQNVKNLRDCQDFKFQQHSESSPHEFQPLGSEAAAASGNTDEMQEHRFSSATWPRAMKSSSKGGFSEKQYPLGDTACAVELPPLSPCLSEELLDPELHMLITPSLREKTESELKFEEDERWIMMEAEEEWEEEKLSEERKSLVTNEETSLADPLEESDQANSVPAVEDGSDRVAVSGTSDHLALHQMCCSVDLQPTRDQLASVPRGSPPDCTCVPAGDTVISEVKNRPDQGLEGLTSGLQCPVEAEQLSDTDSVQMFLELEKECLCEEGVTSSAELLSQASSEGLAPTQDAEDSLLISHFPGAALEQEQHVGFLSVRIKDPDTGLDGEYCNALDSSQVPKAVELCAQPDSGRDASTISKECEKVPFSPKIGGEFKLLADLEPHSELDTGGLLNSNLRASCEENLPVFIASELAKENGNLSQVDCSQTEGNVEEYMERIPLSFAFNYEQDVTSGPEVEVFSSDSNLLTDEIHLESGKGALISQEDSNLASLGNVDLCELSMEKVCDKDGETKEPGCQGKLLGNGAPAQFPTDFQRRSSESEVLSLHLLAGELRLNKAGAETMSDREPQLSMALSQEGELEMRDLDSTLNIFPEEQISKASNTVPGLEEWISSQQRPVPAAVVPMVENALDAVTPMPGEDIPAVALTASEGPAANASASDGTAAATPIVPIPEEDIPGASVVILVEDVMTAAISAPEQAAASSGAVPPVETVTVPIIDEDVTSEEPDTQAAEMFLPEEPAIPTPAGPTAEEPDTPTVPVSTAEEPSMPPPAGPTPEESAAPTLKEPTPEKPDTQVVSSSIPEWSATPATAVPAKEIFSPDGPFLEGTTHTDSVPISEETPVLENASSPGMGIKECLDSSAFGIKEVPGTMIHGKVPLAATDGLNSHELFQKDQVDPLQVKLQQVNGLGQGLIQSAGKNCDVQGLEHDMDEINTRWNTLNKKVAQRIAQLQEALLHCGKFQDALEPLLSWLTDTEELIANQKPPSAEYKVVKAQIQEQKLLQRLLDDRKATVDMLQAEGGRIAQSAELADREKITGQLESLERRWTDLLSKAAARQKQLEDILVLAKQFHETAEPISDFLSVTEKKLANSEPVGTQTAKIHQQIIRHKALEEEIENHATDVHQAVKIGQSLSSLTCPAEQGIMSEKLDSLQARYSEIQDRCCRKASLLEQALFNARLFGEDEVEVLNWLAEVEDKLSTVFVKDYRQDVLQKQHADHLALNEEIINRKKNVDQAIKNGQALLKQTTGEEVLLIQEKLDGIKTRYADITLTSSKALRTLEQARQLATKFHSTYEELTGWLREAEEELAASGGQSPTGEQIPQFQQRQKELKKEVMEHRLVLDTVNEVSHALLELVPWRAREGLDKLVSDANEQYKLISDTVGQRVDEIDAAIQRSQQYEQAADAELAWVAETKRKLMALGPIRLEQDQTTAQLQVQKAFSIDIIRHKDSMDELFSHRGEIFSTCGEEQKAVLQEKTECLIQQYEAVSLLNSERYARLERAQVLVNQFWETYEELSPWAEETLALIAQLPPPAVDHEQLRQQQEEMRQLRESIAEHKPHIDKILKIGPQLKELNPEEGKMVEEKYQKAENMYAQIKDEVRQRALALDEAVSQSAQFHDKIEPMLETLENLSSRLRMPPLIPAEVDKIRECISDNKSATVELEKLQPSFEALKRRGEELIGRSQGADKDLAAKEIQDKLDQMVFFWEDIKARSEEREIKFLDVLELAEKFWYDMAALLTTIKDTQDIVHDLESPGIDPSIIKQQVEAAETIKEETDGLHEELEFIRILGADLIFACGETEKPEVKKSIDEMNNAWENLNKTWKERLEKLEDAMQAAVQYQDTLQAMFDWLDNTVIKLCTMPPVGTDLNTVKDQLNEMKEFKVEVYQQQIEMEKLNHQGELMLKKATDETDRDIIREPLTELKHLWENLGEKIAHRQHKLEGALLALGQFQHALEELMSWLTHTEELLDAQRPISGDPKVIEVELAKHHVLKNDVLAHQATVATVNKAGSELLESSAGDDASSLRSRLETMNQCWESVLQKTEEREQQLQSTLQQAQGFHSEIEDFLLELNRMENQLSASKPTGGLPETAREQLDTHMELHSQLRAKEEIYNQLLDKGRLMLLSRGDSGSGSKTEQSVALLEQKWHAVSSKVEERKLEEALSLATEFQNSLQEFINWLTLAEQSLNIASPPSLILNTVLSQIEEHKVFANEVNDHRDQIIELDQTGNQLKFLSQKQDVVLIKNLLVSVQSRWEKVVQRSIERGRSLDDARKRAKQFHEAWKKLIDWLEDAESHLDSELEISNDPDKIKLQLSKHKEFQKTLGGKQPVYDTTIRTGRALKEKTLLAGDTQKLDNLLGEVRDKWDTVCGKSVERQHKLEEALLFSGQFMDALQALVDWLYKVEPQLAEDQPVHGDLDLVMNLMDAHKVFQKELGKRTGTVQVLKRSGRELIEGSRDDTTWVKGQLQELSTRWDTVCKLSVSKQSRLEQALKQAEEFRDTVHMLLEWLSEAEQTLRFRGALPDDTEALQSLIDTHKEFMKKVEEKRVDVNTAVAMGEAILAVCHPDCITTIKHWITIIRARFEEVLTWAKQHQQRLETALSELVANAELLEELLAWIQWAETTLIQRDQEPIPQNIDRVKALITEHQSFMEEMTRKQPDVDRVTKTYKRKSVEPTHAPFMEKSRSGSRKSLNQPTPPPMPILSQSEAKNPRINQLSARWQQVWLLALERQRKLNDALDRLEELKEFANFDFDVWRKKYMRWMNHKKSRVMDFFRRIDKDQDGKITRQEFIDGILASKFPTTKLEMTAVADIFDRDGDGYIDYYEFVAALHPNKDAYRPTTDADKIEDEVTRQVAQCKCAKRFQVEQIGENKYRFGDSQQLRLVRILRSTVMVRVGGGWMALDEFLVKNDPCRARGRTNIELREKFILPEGASQGMTPFRSRGRRSKPSSRAASPTRSSSSASQSNHSCTSMPSSPATPASGTKVISSSGSKLKRPTPAFHSSRTSLAGDTSNSSSPASTGAKANRADPKKSASRPGSRAGSRAGSRASSRRGSDASDFDLLETQSACSDTSESSAAGGQGSSRRGLTKPSKIPTMSKKTTTASPRTPGPKR.

Disordered regions lie at residues 1 to 24 (MGKPLSRPDCLRRNPTCLGKGEDE), 108 to 140 (VQKSAPVPPRRRPNAERKDNVNRRSWKSFMPPN), 152 to 202 (LSEV…KSVD), 239 to 272 (AAASGNTDEMQEHRFSSATWPRAMKSSSKGGFSE), 333 to 381 (EEWE…VAVS), 941 to 1007 (EPAI…PEWS), and 2865 to 2896 (SVEPTHAPFMEKSRSGSRKSLNQPTPPPMPIL). Basic and acidic residues predominate over residues 120-129 (PNAERKDNVN). 2 consecutive EF-hand domains span residues 2958–2993 (HKKSRVMDFFRRIDKDQDGKITRQEFIDGILASKFP) and 2994–3029 (TTKLEMTAVADIFDRDGDGYIDYYEFVAALHPNKDA). Aspartate 2971, aspartate 2973, aspartate 2975, lysine 2977, glutamate 2982, aspartate 3007, aspartate 3009, aspartate 3011, tyrosine 3013, and glutamate 3018 together coordinate Ca(2+). Residues 3034 to 3106 (TDADKIEDEV…EFLVKNDPCR (73 aa)) enclose the GAR domain. The disordered stretch occupies residues 3122 to 3305 (PEGASQGMTP…ASPRTPGPKR (184 aa)). Residues 3142 to 3176 (SSRAASPTRSSSSASQSNHSCTSMPSSPATPASGT) show a composition bias toward low complexity. Polar residues predominate over residues 3193-3212 (FHSSRTSLAGDTSNSSSPAS). Positions 3227–3241 (SRPGSRAGSRAGSRA) are enriched in low complexity. Over residues 3256 to 3266 (ETQSACSDTSE) the composition is skewed to polar residues. The segment covering 3267–3278 (SSAAGGQGSSRR) has biased composition (low complexity).

It localises to the cytoplasm. The protein localises to the cytoskeleton. This chain is Microtubule-actin cross-linking factor 1, isoforms 6/7, found in Mus musculus (Mouse).